A 66-amino-acid polypeptide reads, in one-letter code: Muscarinic toxin 1 (66 aa).

4 disulfide bridges follow: Cys-3-Cys-24, Cys-17-Cys-42, Cys-46-Cys-58, and Cys-59-Cys-64.

It belongs to the three-finger toxin family. Short-chain subfamily. Aminergic toxin sub-subfamily. As to expression, expressed by the venom gland.

Its subcellular location is the secreted. Its function is as follows. Shows a non-competitive interaction with adrenergic and muscarinic receptors. Binds to alpha-2b (ADRA2B) (IC(50)=2.3 nM), alpha-1a (ADRA1A), alpha-1b (ADRA1B), and alpha-2c (ADRA2C) adrenergic receptors. Reversibly binds to M1 (CHRM1) muscarinic acetylcholine receptors, probably by interacting with the orthosteric site. Also reveals a slightly weaker effect at M3 (CHRM3) and M4 (CHRM4) receptors. The order of potency is ADRA2B&gt;&gt;CHRM1&gt;ADRA1A&gt;ADRA1B&gt;ADRA2C/CHRM4. This Dendroaspis angusticeps (Eastern green mamba) protein is Muscarinic toxin 1.